We begin with the raw amino-acid sequence, 291 residues long: Shikimate dehydrogenase (NADP(+)) (291 aa).

Shikimate contacts are provided by residues 23-25 (SFS) and Thr70. Lys74 acts as the Proton acceptor in catalysis. Shikimate contacts are provided by Asn95 and Asp110. NADP(+) is bound by residues 135–139 (GAGGA) and Leu232. Shikimate is bound at residue Tyr234. An NADP(+)-binding site is contributed by Gly255.

The protein belongs to the shikimate dehydrogenase family. Homodimer.

It catalyses the reaction shikimate + NADP(+) = 3-dehydroshikimate + NADPH + H(+). It functions in the pathway metabolic intermediate biosynthesis; chorismate biosynthesis; chorismate from D-erythrose 4-phosphate and phosphoenolpyruvate: step 4/7. In terms of biological role, involved in the biosynthesis of the chorismate, which leads to the biosynthesis of aromatic amino acids. Catalyzes the reversible NADPH linked reduction of 3-dehydroshikimate (DHSA) to yield shikimate (SA). The chain is Shikimate dehydrogenase (NADP(+)) from Desulforamulus reducens (strain ATCC BAA-1160 / DSM 100696 / MI-1) (Desulfotomaculum reducens).